The following is a 248-amino-acid chain: uncharacterized protein (248 aa).

8-32 (EVALVTGASSGIGKAIALELASAGL) is an NADP(+) binding site. Serine 134 contributes to the substrate binding site. Tyrosine 147 functions as the Proton acceptor in the catalytic mechanism.

Belongs to the short-chain dehydrogenases/reductases (SDR) family.

This is an uncharacterized protein from Sinorhizobium fredii (strain NBRC 101917 / NGR234).